Reading from the N-terminus, the 522-residue chain is MSQQVIIFDTTLRDGEQALQASLSVKEKLQIALALERMGVDVMEVGFPVSSPGDFESVQTIARQIKNSRVCGLARCVEKDIDAAYEALRVADAYRIHTFLATSPMHIATKLRSTLPEVIERAVKMIRRARNYTDDVEFSCEDGGRTPIDDLCRVVEAAINAGATTINIPDTVGYTLPYEYANIFSALRARVPNIDKAILSVHTHDDLGMAVGNALAAVNAGARQIEGAMNGLGERAGNCALEETIMAIKTRGQLMNVHTRINHQEIYRTCQTVSKICNMPIPAHKAIIGSNAFAHSSGIHQDGVLKNRENYEILTPESIGLKQVQLNLTSRSGRAAVKHRMEEMGYGETEYNMDRLYDAFKALADKKGQVFDYDLEALAFINQQSEEPEYFRLDTFNVQSGSSVIATATVQLRCGDEQKTEAATGNGPVDAVYQAINRLTEFDAELVSYQLTAKGHGKDALGQVDIVVQYNGRKFHGVGLATDIVESSAKAMVNALNTIWRARQVEQELQRKSQVKDQKETV.

A Pyruvate carboxyltransferase domain is found at 5–267 (VIIFDTTLRD…HTRINHQEIY (263 aa)). Mn(2+) contacts are provided by Asp-14, His-202, His-204, and Asn-238. The regulatory domain stretch occupies residues 392 to 522 (RLDTFNVQSG…SQVKDQKETV (131 aa)).

The protein belongs to the alpha-IPM synthase/homocitrate synthase family. LeuA type 1 subfamily. As to quaternary structure, homodimer. Requires Mn(2+) as cofactor.

It localises to the cytoplasm. It catalyses the reaction 3-methyl-2-oxobutanoate + acetyl-CoA + H2O = (2S)-2-isopropylmalate + CoA + H(+). It functions in the pathway amino-acid biosynthesis; L-leucine biosynthesis; L-leucine from 3-methyl-2-oxobutanoate: step 1/4. Its function is as follows. Catalyzes the condensation of the acetyl group of acetyl-CoA with 3-methyl-2-oxobutanoate (2-ketoisovalerate) to form 3-carboxy-3-hydroxy-4-methylpentanoate (2-isopropylmalate). This Erwinia tasmaniensis (strain DSM 17950 / CFBP 7177 / CIP 109463 / NCPPB 4357 / Et1/99) protein is 2-isopropylmalate synthase.